Here is a 512-residue protein sequence, read N- to C-terminus: Maturase K (512 aa).

Belongs to the intron maturase 2 family. MatK subfamily.

It is found in the plastid. It localises to the chloroplast. Functionally, usually encoded in the trnK tRNA gene intron. Probably assists in splicing its own and other chloroplast group II introns. In Lilium canadense (Canada lily), this protein is Maturase K.